Here is a 397-residue protein sequence, read N- to C-terminus: CCA-adding enzyme (397 aa).

Positions 26 and 29 each coordinate ATP. Residues G26 and R29 each coordinate CTP. Residues D39 and D41 each coordinate Mg(2+). ATP contacts are provided by R110, D153, R156, R159, and R162. CTP is bound by residues R110, D153, R156, R159, and R162.

It belongs to the tRNA nucleotidyltransferase/poly(A) polymerase family. Bacterial CCA-adding enzyme type 3 subfamily. As to quaternary structure, homodimer. Mg(2+) serves as cofactor.

The catalysed reaction is a tRNA precursor + 2 CTP + ATP = a tRNA with a 3' CCA end + 3 diphosphate. It carries out the reaction a tRNA with a 3' CCA end + 2 CTP + ATP = a tRNA with a 3' CCACCA end + 3 diphosphate. Functionally, catalyzes the addition and repair of the essential 3'-terminal CCA sequence in tRNAs without using a nucleic acid template. Adds these three nucleotides in the order of C, C, and A to the tRNA nucleotide-73, using CTP and ATP as substrates and producing inorganic pyrophosphate. tRNA 3'-terminal CCA addition is required both for tRNA processing and repair. Also involved in tRNA surveillance by mediating tandem CCA addition to generate a CCACCA at the 3' terminus of unstable tRNAs. While stable tRNAs receive only 3'-terminal CCA, unstable tRNAs are marked with CCACCA and rapidly degraded. This is CCA-adding enzyme from Bacillus cereus (strain B4264).